Reading from the N-terminus, the 263-residue chain is Protein MARD1 (263 aa).

The segment at 219 to 263 (SFLSRCFTCKKNLDQKQDIYIYRGEKGFCSSECRYQEMLLDQMET) adopts an FLZ-type zinc-finger fold.

Belongs to the FLZ family. Interacts with KIN10 and KIN11 via its FLZ-type zinc finger domain. Interacts with KINB1 and KINB2 via its N-terminal part. Interacts with TZF4, TZF5 and TZF6. Interacts with MPK3 and MPK6.

The protein localises to the cytoplasm. It is found in the stress granule. It localises to the P-body. Its function is as follows. May act as an adapter to facilitate the interaction of SnRK1 complex with effector proteins, conferring tissue- and stimulus-type specific differences in the SnRK1 regulation pathway. Involved in seed dormancy control. This is Protein MARD1 from Arabidopsis thaliana (Mouse-ear cress).